Here is a 341-residue protein sequence, read N- to C-terminus: S-adenosylmethionine:tRNA ribosyltransferase-isomerase (341 aa).

It belongs to the QueA family. Monomer.

It is found in the cytoplasm. It carries out the reaction 7-aminomethyl-7-carbaguanosine(34) in tRNA + S-adenosyl-L-methionine = epoxyqueuosine(34) in tRNA + adenine + L-methionine + 2 H(+). It functions in the pathway tRNA modification; tRNA-queuosine biosynthesis. Its function is as follows. Transfers and isomerizes the ribose moiety from AdoMet to the 7-aminomethyl group of 7-deazaguanine (preQ1-tRNA) to give epoxyqueuosine (oQ-tRNA). The protein is S-adenosylmethionine:tRNA ribosyltransferase-isomerase of Staphylococcus epidermidis (strain ATCC 12228 / FDA PCI 1200).